The following is a 675-amino-acid chain: Nexilin (675 aa).

The interval 1 to 66 (MNDISQKAEI…RKEQYIRERE (66 aa)) is disordered. The residue at position 16 (Lys16) is a Phosphoserine. Basic and acidic residues predominate over residues 27-66 (GKGDVKDKFEAMQRAREERNQRRSRDEKQRRKEQYIRERE). At Ser80 the chain carries Phosphoserine. The segment at 105 to 127 (RFAEMEKQRQEEQRKRTEEERKR) is disordered. Residue Ser241 is modified to Phosphoserine. Disordered regions lie at residues 254–278 (LERQ…EEEK) and 313–336 (SFEE…ARRR). Phosphoserine occurs at positions 357 and 365. Thr370 carries the phosphothreonine modification. 2 disordered regions span residues 487–513 (ENFH…KVNM) and 551–584 (LQKK…APWF). A phosphoserine mark is found at Ser564 and Ser569. One can recognise an Ig-like domain in the interval 582–670 (PWFKKPLKNT…GSAASTCILT (89 aa)).

As to quaternary structure, interacts with F-actin. In terms of tissue distribution, abundantly expressed in heart and skeletal muscle, and at lower levels in placenta, lung, liver and pancreas. Also expressed in HeLaS3 and MOLT-4 cell lines.

The protein localises to the cytoplasm. The protein resides in the cytoskeleton. Its subcellular location is the cell junction. It is found in the adherens junction. It localises to the myofibril. The protein localises to the sarcomere. The protein resides in the z line. Involved in regulating cell migration through association with the actin cytoskeleton. Has an essential role in the maintenance of Z line and sarcomere integrity. In Homo sapiens (Human), this protein is Nexilin.